The following is a 1258-amino-acid chain: Non-secreted LysM effector LysM19 (1258 aa).

The disordered stretch occupies residues 148–168; sequence VTQSLPNISSHEKRDDHEGNS. Over residues 157–168 the composition is skewed to basic and acidic residues; it reads SHEKRDDHEGNS. 2 consecutive LysM domains span residues 1028 to 1073 and 1179 to 1227; these read IVYT…SICL and RWHV…AYCT.

It belongs to the secreted LysM effector family.

Non-secreted LysM effector that might be involved in manipulation of host defenses for successful infection. This is Non-secreted LysM effector LysM19 from Penicillium expansum (Blue mold rot fungus).